We begin with the raw amino-acid sequence, 474 residues long: Ribulose bisphosphate carboxylase large chain (474 aa).

P2 bears the N-acetylproline mark. K13 carries the N6,N6,N6-trimethyllysine modification. Substrate-binding residues include N122 and T172. The active-site Proton acceptor is K174. K176 is a binding site for substrate. 3 residues coordinate Mg(2+): K200, D202, and E203. K200 bears the N6-carboxylysine mark. H293 serves as the catalytic Proton acceptor. Substrate-binding residues include R294, H326, and S378.

The protein belongs to the RuBisCO large chain family. Type I subfamily. In terms of assembly, heterohexadecamer of 8 large chains and 8 small chains; disulfide-linked. The disulfide link is formed within the large subunit homodimers. It depends on Mg(2+) as a cofactor. Post-translationally, the disulfide bond which can form in the large chain dimeric partners within the hexadecamer appears to be associated with oxidative stress and protein turnover.

It is found in the plastid. Its subcellular location is the chloroplast. It carries out the reaction 2 (2R)-3-phosphoglycerate + 2 H(+) = D-ribulose 1,5-bisphosphate + CO2 + H2O. The enzyme catalyses D-ribulose 1,5-bisphosphate + O2 = 2-phosphoglycolate + (2R)-3-phosphoglycerate + 2 H(+). Functionally, ruBisCO catalyzes two reactions: the carboxylation of D-ribulose 1,5-bisphosphate, the primary event in carbon dioxide fixation, as well as the oxidative fragmentation of the pentose substrate in the photorespiration process. Both reactions occur simultaneously and in competition at the same active site. This is Ribulose bisphosphate carboxylase large chain from Oltmannsiellopsis viridis (Marine flagellate).